Consider the following 283-residue polypeptide: Pantothenate synthetase (283 aa).

30–37 (MGTLHDGH) is a binding site for ATP. Catalysis depends on His-37, which acts as the Proton donor. Residue Gln-61 coordinates (R)-pantoate. Gln-61 is a binding site for beta-alanine. 148–151 (GLKD) is a binding site for ATP. Gln-154 contributes to the (R)-pantoate binding site. Residue 185–188 (MSSR) participates in ATP binding.

This sequence belongs to the pantothenate synthetase family. Homodimer.

Its subcellular location is the cytoplasm. It catalyses the reaction (R)-pantoate + beta-alanine + ATP = (R)-pantothenate + AMP + diphosphate + H(+). The protein operates within cofactor biosynthesis; (R)-pantothenate biosynthesis; (R)-pantothenate from (R)-pantoate and beta-alanine: step 1/1. In terms of biological role, catalyzes the condensation of pantoate with beta-alanine in an ATP-dependent reaction via a pantoyl-adenylate intermediate. This Leptospira biflexa serovar Patoc (strain Patoc 1 / Ames) protein is Pantothenate synthetase.